The chain runs to 299 residues: uncharacterized protein (299 aa).

The protein belongs to the glycosyltransferase 2 family.

This is an uncharacterized protein from Mycoplasma pneumoniae (strain ATCC 29342 / M129 / Subtype 1) (Mycoplasmoides pneumoniae).